Consider the following 141-residue polypeptide: Cytochrome c-type biogenesis protein CcmE (141 aa).

The Cytoplasmic segment spans residues 1–7 (MRARTRR). A helical; Signal-anchor for type II membrane protein transmembrane segment spans residues 8–28 (LYTFGIAAALIVAAAALAFFA). The Periplasmic segment spans residues 29-141 (LRENANLFYT…RELKPLEAGG (113 aa)). Heme contacts are provided by H125 and Y129.

It belongs to the CcmE/CycJ family.

The protein resides in the cell inner membrane. Heme chaperone required for the biogenesis of c-type cytochromes. Transiently binds heme delivered by CcmC and transfers the heme to apo-cytochromes in a process facilitated by CcmF and CcmH. The protein is Cytochrome c-type biogenesis protein CcmE of Hyphomonas neptunium (strain ATCC 15444).